We begin with the raw amino-acid sequence, 481 residues long: NADH-quinone oxidoreductase subunit N (481 aa).

The next 13 helical transmembrane spans lie at 14–34 (LILS…GDGF), 38–57 (IGWG…TGPA), 76–96 (FAKL…PGFF), 108–128 (PVLI…GDLL), 162–182 (FVLG…LYGF), 204–224 (MFGM…VPFH), 235–255 (PTPV…ALLL), 272–292 (IVVF…IGQT), 297–317 (LLAY…AAGS), 323–343 (ATMT…ICVL), 369–389 (LAAA…LFGF), 403–423 (GFWP…FYYL), and 449–469 (GLIT…IPLL).

It belongs to the complex I subunit 2 family. In terms of assembly, NDH-1 is composed of 14 different subunits. Subunits NuoA, H, J, K, L, M, N constitute the membrane sector of the complex.

The protein localises to the cell inner membrane. It catalyses the reaction a quinone + NADH + 5 H(+)(in) = a quinol + NAD(+) + 4 H(+)(out). NDH-1 shuttles electrons from NADH, via FMN and iron-sulfur (Fe-S) centers, to quinones in the respiratory chain. The immediate electron acceptor for the enzyme in this species is believed to be ubiquinone. Couples the redox reaction to proton translocation (for every two electrons transferred, four hydrogen ions are translocated across the cytoplasmic membrane), and thus conserves the redox energy in a proton gradient. In Rhizorhabdus wittichii (strain DSM 6014 / CCUG 31198 / JCM 15750 / NBRC 105917 / EY 4224 / RW1) (Sphingomonas wittichii), this protein is NADH-quinone oxidoreductase subunit N.